The sequence spans 464 residues: Heterogeneous nuclear ribonucleoprotein K (464 aa).

Methionine 1 bears the N-acetylmethionine mark. Residues 1-37 (METEQPEETFPNTETNGEFGKRPAEDMEEEQAFKRSR) are disordered. Positions 1 to 276 (METEQPEETF…GRGGRPMPPS (276 aa)) are necessary for interaction with DDX1. Over residues 19–37 (FGKRPAEDMEEEQAFKRSR) the composition is skewed to basic and acidic residues. Lysine 34 is modified (N6-acetyllysine; alternate). Residue lysine 34 forms a Glycyl lysine isopeptide (Lys-Gly) (interchain with G-Cter in SUMO1); alternate linkage. Lysine 34 participates in a covalent cross-link: Glycyl lysine isopeptide (Lys-Gly) (interchain with G-Cter in SUMO2); alternate. Serine 36 bears the Phosphoserine mark. Phosphothreonine is present on threonine 39. The KH 1 domain occupies 42–104 (MVELRILLQS…ETIGEILKKI (63 aa)). Glycyl lysine isopeptide (Lys-Gly) (interchain with G-Cter in SUMO2) cross-links involve residues lysine 52 and lysine 60. 2 tandem repeats follow at residues 54 to 76 (AGAVIGKGGKNIKALRTDYNASV) and 59 to 62 (GKGG). Residues 54–421 (AGAVIGKGGK…QIRHESGASI (368 aa)) are 2 X 22 AA approximate repeats. A 5 X 4 AA repeats of G-X-G-G region spans residues 59-407 (GKGGKNIKAL…LAGSIIGKGG (349 aa)). Serine 75 and serine 116 each carry phosphoserine. The 66-residue stretch at 144-209 (DCELRLLIHQ…DRVVECIKII (66 aa)) folds into the KH 2 domain. Residue lysine 163 forms a Glycyl lysine isopeptide (Lys-Gly) (interchain with G-Cter in SUMO1); alternate linkage. A Glycyl lysine isopeptide (Lys-Gly) (interchain with G-Cter in SUMO2); alternate cross-link involves residue lysine 163. Position 198 is an N6-acetyllysine (lysine 198). The interval 209 to 337 (ILDLISESPI…RPGDRYDGMV (129 aa)) is interaction with ZIK1. Phosphoserine is present on residues serine 214 and serine 216. Lysine 219 participates in a covalent cross-link: Glycyl lysine isopeptide (Lys-Gly) (interchain with G-Cter in SUMO2); alternate. Residue lysine 219 is modified to N6-succinyllysine; alternate. The tract at residues 236–273 (YGGFTMMFDDRRGRPVGFPMRGRGGFDRMPPGRGGRPM) is RNA-binding RGG-box. Tandem repeats lie at residues 245-250 (DRRGRP), 257-260 (GRGG), and 267-270 (GRGG). The 2 X 6 AA approximate repeats stretch occupies residues 245–329 (DRRGRPVGFP…LMAYDRRGRP (85 aa)). Residues 250–329 (PVGFPMRGRG…LMAYDRRGRP (80 aa)) form a disordered region. Residues 252-266 (GFPMRGRGGFDRMPP) are compositionally biased toward low complexity. The span at 276 to 285 (SRRDYDDMSP) shows a compositional bias: basic and acidic residues. Serine 284 is subject to Phosphoserine. The 3-4 repeat unit spans residues 295–298 (GRGG). At arginine 316 the chain carries Omega-N-methylarginine. The 2-2 repeat unit spans residues 324–329 (DRRGRP). Arginine 377 is modified (omega-N-methylarginine). Phosphoserine is present on serine 379. Phosphotyrosine is present on tyrosine 380. In terms of domain architecture, KH 3 spans 387-451 (IITTQVTIPK…DQIQNAQYLL (65 aa)). Repeat copies occupy residues 399–421 (AGSIIGKGGQRIKQIRHESGASI) and 404–407 (GKGG). Position 405 is an N6-acetyllysine; alternate (lysine 405). A Glycyl lysine isopeptide (Lys-Gly) (interchain with G-Cter in SUMO2); alternate cross-link involves residue lysine 405. Serine 420 carries the phosphoserine modification. Lysine 422 participates in a covalent cross-link: Glycyl lysine isopeptide (Lys-Gly) (interchain with G-Cter in SUMO1); alternate. Lysine 422 is covalently cross-linked (Glycyl lysine isopeptide (Lys-Gly) (interchain with G-Cter in SUMO2); alternate). Lysine 422 is covalently cross-linked (Glycyl lysine isopeptide (Lys-Gly) (interchain with G-Cter in SUMO); alternate).

Identified in the spliceosome C complex. Interacts with ANKRD28, RBM42 and ZIK1. Interacts with DDX1. Interacts with MDM2; this interaction leads to ubiquitination and proteasomal degradation. Interacts with p53/TP53. Interacts with BRDT. Interacts with IVNS1ABP. Interacts with PPIA/CYPA. Part of a transcription inhibitory ribonucleoprotein complex composed at least of the circular RNA circZNF827, ZNF827 and HNRNPL. Sumoylated by CBX4. Sumoylation is increased upon DNA damage, such as that produced by doxorubicin, etoposide, UV light and camptothecin, due to enhanced CBX4 phosphorylation by HIPK2 under these conditions. In terms of processing, ubiquitinated by MDM2. Doxorubicin treatment does not affect monoubiquitination, but slightly decreases HNRNPK poly-ubiquitination. Post-translationally, O-glycosylated (O-GlcNAcylated), in a cell cycle-dependent manner.

It localises to the cytoplasm. Its subcellular location is the nucleus. The protein localises to the nucleoplasm. It is found in the cell projection. The protein resides in the podosome. Functionally, one of the major pre-mRNA-binding proteins. Binds tenaciously to poly(C) sequences. Likely to play a role in the nuclear metabolism of hnRNAs, particularly for pre-mRNAs that contain cytidine-rich sequences. Can also bind poly(C) single-stranded DNA. Plays an important role in p53/TP53 response to DNA damage, acting at the level of both transcription activation and repression. When sumoylated, acts as a transcriptional coactivator of p53/TP53, playing a role in p21/CDKN1A and 14-3-3 sigma/SFN induction. As far as transcription repression is concerned, acts by interacting with long intergenic RNA p21 (lincRNA-p21), a non-coding RNA induced by p53/TP53. This interaction is necessary for the induction of apoptosis, but not cell cycle arrest. As part of a ribonucleoprotein complex composed at least of ZNF827, HNRNPL and the circular RNA circZNF827 that nucleates the complex on chromatin, may negatively regulate the transcription of genes involved in neuronal differentiation. The polypeptide is Heterogeneous nuclear ribonucleoprotein K (HNRNPK) (Bos taurus (Bovine)).